Consider the following 326-residue polypeptide: GDP-mannose transporter (326 aa).

Residues Met1–Ser4 lie on the Cytoplasmic side of the membrane. A helical transmembrane segment spans residues Ile5 to Val25. Residues Thr26–Ser35 are Lumenal-facing. Residues Phe36 to Ile56 traverse the membrane as a helical segment. The Cytoplasmic segment spans residues Gly57–Lys74. Residues Lys75–Leu97 traverse the membrane as a helical segment. Residues Ser98–Pro100 lie on the Lumenal side of the membrane. The helical transmembrane segment at Val101–Gly123 threads the bilayer. Topologically, residues Ser124–Ala129 are cytoplasmic. The chain crosses the membrane as a helical span at residues Leu130–Ile152. At Ala153–Thr163 the chain is on the lumenal side. Residues Ala164 to Leu184 traverse the membrane as a helical segment. Topologically, residues Tyr185–Ser208 are cytoplasmic. Residues Ile209–Val229 form a helical membrane-spanning segment. Residues Asn230–Asn237 are Lumenal-facing. Residues Leu238 to Ala258 traverse the membrane as a helical segment. Topologically, residues Trp259–Thr268 are cytoplasmic. The helical transmembrane segment at Tyr269 to Gly289 threads the bilayer. Residues Thr290–Pro291 lie on the Lumenal side of the membrane. The chain crosses the membrane as a helical span at residues Ala292–Val312. The Cytoplasmic portion of the chain corresponds to Ala313–Lys326.

The protein belongs to the TPT transporter family. SLC35D subfamily. Homooligomer.

The protein resides in the golgi apparatus membrane. Its subcellular location is the cytoplasmic vesicle membrane. It is found in the endoplasmic reticulum membrane. In terms of biological role, involved in the import of GDP-mannose from the cytoplasm into the Golgi lumen. The chain is GDP-mannose transporter (VRG4) from Yarrowia lipolytica (strain CLIB 122 / E 150) (Yeast).